Here is a 206-residue protein sequence, read N- to C-terminus: Isochorismatase family protein 1B (206 aa).

The protein belongs to the isochorismatase family.

This Dictyostelium discoideum (Social amoeba) protein is Isochorismatase family protein 1B.